The primary structure comprises 600 residues: Spastin (600 aa).

The tract at residues 1 to 39 (MNSPGGRNDKKKPVTPAAETGPGSPTTPPSTETQVVLAP) is disordered. Topologically, residues 1–53 (MNSPGGRNDKKKPVTPAAETGPGSPTTPPSTETQVVLAPPSPHKRNLHLFSYP) are cytoplasmic. A compositionally biased stretch (low complexity) spans 15 to 33 (TPAAETGPGSPTTPPSTET). An intramembrane region (helical) is located at residues 54 to 74 (LLAVFSLLRFLAFQLGLLFVW). Residues 75–600 (CCELLSRSVM…WNQDFGDTTV (526 aa)) lie on the Cytoplasmic side of the membrane. An MIT domain is found at 110–185 (YHQQAFQYIS…IMAKDRLQLL (76 aa)). A disordered region spans residues 213–294 (GLLKPEKGAV…KPATPTTAVR (82 aa)). A compositionally biased stretch (basic and acidic residues) spans 216–228 (KPEKGAVPKKKDP). Over residues 253-291 (PNCTSVPTSARQAGAHTPSNRGATGKNNTRTNKPATPTT) the composition is skewed to polar residues. 366–373 (GPPGNGKT) contributes to the ATP binding site.

The protein belongs to the AAA ATPase family. Spastin subfamily. In terms of assembly, homohexamer. The homohexamer is stabilized by ATP-binding. The homohexamer may adopt a ring conformation through which microtubules pass prior to being severed. Interacts with microtubules.

It is found in the membrane. The protein resides in the cytoplasm. Its subcellular location is the cytoskeleton. The protein localises to the microtubule organizing center. It localises to the centrosome. It is found in the perinuclear region. The protein resides in the nucleus. The catalysed reaction is n ATP + n H2O + a microtubule = n ADP + n phosphate + (n+1) alpha/beta tubulin heterodimers.. ATP-dependent microtubule severing protein that specifically recognizes and cuts microtubules that are polyglutamylated. Preferentially recognizes and acts on microtubules decorated with short polyglutamate tails: severing activity increases as the number of glutamates per tubulin rises from one to eight, but decreases beyond this glutamylation threshold. Microtubule severing promotes reorganization of cellular microtubule arrays and the release of microtubules from the centrosome following nucleation. Required for membrane traffic from the endoplasmic reticulum (ER) to the Golgi and for completion of the abscission stage of cytokinesis. Also plays a role in axon growth and the formation of axonal branches. The protein is Spastin of Xenopus laevis (African clawed frog).